Here is a 201-residue protein sequence, read N- to C-terminus: FMN-dependent NADH:quinone oxidoreductase (201 aa).

FMN is bound by residues 92–95 (MWNL) and 136–139 (STGG).

It belongs to the azoreductase type 1 family. As to quaternary structure, homodimer. It depends on FMN as a cofactor.

The enzyme catalyses 2 a quinone + NADH + H(+) = 2 a 1,4-benzosemiquinone + NAD(+). It catalyses the reaction N,N-dimethyl-1,4-phenylenediamine + anthranilate + 2 NAD(+) = 2-(4-dimethylaminophenyl)diazenylbenzoate + 2 NADH + 2 H(+). Its function is as follows. Quinone reductase that provides resistance to thiol-specific stress caused by electrophilic quinones. Also exhibits azoreductase activity. Catalyzes the reductive cleavage of the azo bond in aromatic azo compounds to the corresponding amines. This chain is FMN-dependent NADH:quinone oxidoreductase, found in Coprothermobacter proteolyticus (strain ATCC 35245 / DSM 5265 / OCM 4 / BT).